Consider the following 341-residue polypeptide: Ketol-acid reductoisomerase (NADP(+)) (341 aa).

The region spanning 2–181 (AKVYYNGDVN…GAARAGVLET (180 aa)) is the KARI N-terminal Rossmann domain. Residues 25–28 (YGSQ), R48, S52, and 82–85 (DEHQ) each bind NADP(+). H107 is an active-site residue. G133 serves as a coordination point for NADP(+). The 146-residue stretch at 182–327 (TFKEETETDL…RELREMMPFV (146 aa)) folds into the KARI C-terminal knotted domain. 4 residues coordinate Mg(2+): D190, E194, E226, and E230. A substrate-binding site is contributed by S251.

This sequence belongs to the ketol-acid reductoisomerase family. Mg(2+) serves as cofactor.

It catalyses the reaction (2R)-2,3-dihydroxy-3-methylbutanoate + NADP(+) = (2S)-2-acetolactate + NADPH + H(+). The catalysed reaction is (2R,3R)-2,3-dihydroxy-3-methylpentanoate + NADP(+) = (S)-2-ethyl-2-hydroxy-3-oxobutanoate + NADPH + H(+). It participates in amino-acid biosynthesis; L-isoleucine biosynthesis; L-isoleucine from 2-oxobutanoate: step 2/4. It functions in the pathway amino-acid biosynthesis; L-valine biosynthesis; L-valine from pyruvate: step 2/4. Its function is as follows. Involved in the biosynthesis of branched-chain amino acids (BCAA). Catalyzes an alkyl-migration followed by a ketol-acid reduction of (S)-2-acetolactate (S2AL) to yield (R)-2,3-dihydroxy-isovalerate. In the isomerase reaction, S2AL is rearranged via a Mg-dependent methyl migration to produce 3-hydroxy-3-methyl-2-ketobutyrate (HMKB). In the reductase reaction, this 2-ketoacid undergoes a metal-dependent reduction by NADPH to yield (R)-2,3-dihydroxy-isovalerate. The chain is Ketol-acid reductoisomerase (NADP(+)) from Shouchella clausii (strain KSM-K16) (Alkalihalobacillus clausii).